A 309-amino-acid chain; its full sequence is Probable sugar phosphate/phosphate translocator At5g05820 (309 aa).

A run of 10 helical transmembrane segments spans residues 9-29 (FFTI…LLLN), 42-62 (IFLT…AIAW), 77-97 (FFKI…GNIS), 100-120 (FLPV…TAVF), 130-150 (AWLT…ASGG), 154-174 (FHLF…LKSV), 192-212 (LLLY…LIME), 229-249 (IVWY…TNFL), 256-278 (ALTL…ILIF), and 282-301 (VSVT…ILYS). The region spanning 30-147 (KYLLSNYGFK…VPVVTGVVIA (118 aa)) is the EamA domain.

The protein belongs to the TPT transporter family. TPT (TC 2.A.7.9) subfamily.

The protein resides in the membrane. The sequence is that of Probable sugar phosphate/phosphate translocator At5g05820 from Arabidopsis thaliana (Mouse-ear cress).